Reading from the N-terminus, the 229-residue chain is tRNA (guanine-N(7)-)-methyltransferase (229 aa).

4 residues coordinate S-adenosyl-L-methionine: Glu-59, Glu-84, Asp-111, and Asp-134. Asp-134 is an active-site residue. Residue Lys-138 participates in substrate binding. The interval 140–145 is interaction with RNA; sequence KHNKRR. Substrate-binding positions include Asp-170 and 207–210; that span reads TKFE.

Belongs to the class I-like SAM-binding methyltransferase superfamily. TrmB family.

The catalysed reaction is guanosine(46) in tRNA + S-adenosyl-L-methionine = N(7)-methylguanosine(46) in tRNA + S-adenosyl-L-homocysteine. It functions in the pathway tRNA modification; N(7)-methylguanine-tRNA biosynthesis. Functionally, catalyzes the formation of N(7)-methylguanine at position 46 (m7G46) in tRNA. The sequence is that of tRNA (guanine-N(7)-)-methyltransferase from Saccharophagus degradans (strain 2-40 / ATCC 43961 / DSM 17024).